Consider the following 550-residue polypeptide: MWPQPRLPPHPAMSEKTQQGKLAAAKKKLKAYWQRKSPGIPAGANRKKKVNGSSPDTATSGGYHSPGDSATGVYGEGRASSTTLQDLESQYQELAVALDSSSAIISQLTENINSLVRTSKEEKKHEIHLVQKLGRSLFKLKNQTAEPLAPEPPAGPSKVEQLQDETNHLRKELESVGRQLQAEVENNQMLSLLNRRQEERLREQEERLHEQEERLHEQEERLCEQEERLREQEERLCEQEERLREQEERLCEQEERLREQEERLCEQEERLREQEERLCEQEERLREQEERLCEQEERLREQEERLCEQEERLREQEERLCEQEERLCEQEERLCEQEERLCEQEERLCEQEKLPGQERLLEEVEKLLEQERRQEEQERLLERERLLDEVEELLEQERLRQQDERLWQQETLRELERLRELERLRELERMLELGWEALYEQRAEPRSGFEELNNENKSTLQLEQQVKELEKSGGAEEPRGSESAAAARPVPGAPVPQGAWMCGQAGWTPQEHPGLSGEAVGTGEAAGGAEEAACHSFRAAENRELNITII.

The segment covering 1–11 (MWPQPRLPPHP) has biased composition (pro residues). Residues 1-77 (MWPQPRLPPH…DSATGVYGEG (77 aa)) form a disordered region. The span at 51-62 (NGSSPDTATSGG) shows a compositional bias: polar residues. Residues 157 to 405 (SKVEQLQDET…QERLRQQDER (249 aa)) are a coiled coil. Basic and acidic residues predominate over residues 467–480 (KELEKSGGAEEPRG). Residues 467-529 (KELEKSGGAE…VGTGEAAGGA (63 aa)) are disordered. Composition is skewed to low complexity over residues 484-499 (AAAA…PQGA) and 517-529 (GEAV…AGGA).

The protein belongs to the GOLGA6 family.

The chain is Putative golgin subfamily A member 6-like protein 19 (GOLGA6L19) from Homo sapiens (Human).